The sequence spans 112 residues: uncharacterized protein (112 aa).

The chain crosses the membrane as a helical span at residues 62-82; that stretch reads THSFIFFILFLFIFIFLTFSH.

It is found in the membrane. This is an uncharacterized protein from Saccharomyces cerevisiae (strain ATCC 204508 / S288c) (Baker's yeast).